Here is an 82-residue protein sequence, read N- to C-terminus: Small ribosomal subunit protein bS18 (82 aa).

The segment at 1 to 20 (MVDINQIPTRRPFHRRRKTC) is disordered.

Belongs to the bacterial ribosomal protein bS18 family. In terms of assembly, part of the 30S ribosomal subunit. Forms a tight heterodimer with protein bS6.

In terms of biological role, binds as a heterodimer with protein bS6 to the central domain of the 16S rRNA, where it helps stabilize the platform of the 30S subunit. The sequence is that of Small ribosomal subunit protein bS18 from Brucella abortus (strain 2308).